We begin with the raw amino-acid sequence, 451 residues long: Tubulin alpha-1 chain (451 aa).

Gln11 lines the GTP pocket. Lys40 is modified (N6-acetyllysine). Positions 71, 144, 145, 179, 206, and 228 each coordinate GTP. Residue Glu71 coordinates Mg(2+). Glu254 is a catalytic residue.

The protein belongs to the tubulin family. Dimer of alpha and beta chains. A typical microtubule is a hollow water-filled tube with an outer diameter of 25 nm and an inner diameter of 15 nM. Alpha-beta heterodimers associate head-to-tail to form protofilaments running lengthwise along the microtubule wall with the beta-tubulin subunit facing the microtubule plus end conferring a structural polarity. Microtubules usually have 13 protofilaments but different protofilament numbers can be found in some organisms and specialized cells. Mg(2+) serves as cofactor. Undergoes a tyrosination/detyrosination cycle, the cyclic removal and re-addition of a C-terminal tyrosine residue by the enzymes tubulin tyrosine carboxypeptidase (TTCP) and tubulin tyrosine ligase (TTL), respectively. Post-translationally, acetylation of alpha chains at Lys-40 stabilizes microtubules and affects affinity and processivity of microtubule motors. This modification has a role in multiple cellular functions, ranging from cell motility, cell cycle progression or cell differentiation to intracellular trafficking and signaling.

The protein resides in the cytoplasm. The protein localises to the cytoskeleton. It carries out the reaction GTP + H2O = GDP + phosphate + H(+). Tubulin is the major constituent of microtubules, a cylinder consisting of laterally associated linear protofilaments composed of alpha- and beta-tubulin heterodimers. Microtubules grow by the addition of GTP-tubulin dimers to the microtubule end, where a stabilizing cap forms. Below the cap, tubulin dimers are in GDP-bound state, owing to GTPase activity of alpha-tubulin. The chain is Tubulin alpha-1 chain (TUBA1) from Chlamydomonas reinhardtii (Chlamydomonas smithii).